A 125-amino-acid chain; its full sequence is MTTFKLVISDPKSGIAKQIEISGANAEKLIGKKIGDQIPVKELGLDLKALFGKDFPEDVKMEIRGGTDKDGFPMRPDIHGPRRVRILLSKGPGFRPKEKGERRKKTVRGNTISPEIVQVNVKLVY.

The protein belongs to the eukaryotic ribosomal protein eS6 family.

This chain is Small ribosomal subunit protein eS6, found in Pyrococcus horikoshii (strain ATCC 700860 / DSM 12428 / JCM 9974 / NBRC 100139 / OT-3).